We begin with the raw amino-acid sequence, 461 residues long: Photosystem II CP43 reaction center protein (461 aa).

Residues 1-2 (ME) constitute a propeptide that is removed on maturation. The residue at position 3 (Thr3) is an N-acetylthreonine. Thr3 is subject to Phosphothreonine. 5 helical membrane passes run 57–81 (LFEVAHFVPEKPMYEQGLILLPHLA), 122–143 (LIGPETLEESFPFFGYVWKDKN), 166–188 (KAMYFGGVYDTWAPGGGDVRIIT), 243–263 (TPWPWARRAFVWSGEAYLSYS), and 279–300 (WFNNTAYPSEFYGPTGPEASQS). Position 355 (Glu355) interacts with [CaMn4O5] cluster. A helical transmembrane segment spans residues 435 to 459 (RARAAAAGFEKGIDRLDEPVLSMRP).

The protein belongs to the PsbB/PsbC family. PsbC subfamily. In terms of assembly, PSII is composed of 1 copy each of membrane proteins PsbA, PsbB, PsbC, PsbD, PsbE, PsbF, PsbH, PsbI, PsbJ, PsbK, PsbL, PsbM, PsbT, PsbX, PsbY, PsbZ, Psb30/Ycf12, at least 3 peripheral proteins of the oxygen-evolving complex and a large number of cofactors. It forms dimeric complexes. The cofactor is Binds multiple chlorophylls and provides some of the ligands for the Ca-4Mn-5O cluster of the oxygen-evolving complex. It may also provide a ligand for a Cl- that is required for oxygen evolution. PSII binds additional chlorophylls, carotenoids and specific lipids..

Its subcellular location is the plastid. The protein resides in the chloroplast thylakoid membrane. In terms of biological role, one of the components of the core complex of photosystem II (PSII). It binds chlorophyll and helps catalyze the primary light-induced photochemical processes of PSII. PSII is a light-driven water:plastoquinone oxidoreductase, using light energy to abstract electrons from H(2)O, generating O(2) and a proton gradient subsequently used for ATP formation. The sequence is that of Photosystem II CP43 reaction center protein from Tetradesmus obliquus (Green alga).